The sequence spans 313 residues: Methionyl-tRNA formyltransferase (313 aa).

113–116 (SLLP) is a (6S)-5,6,7,8-tetrahydrofolate binding site.

It belongs to the Fmt family.

The enzyme catalyses L-methionyl-tRNA(fMet) + (6R)-10-formyltetrahydrofolate = N-formyl-L-methionyl-tRNA(fMet) + (6S)-5,6,7,8-tetrahydrofolate + H(+). Attaches a formyl group to the free amino group of methionyl-tRNA(fMet). The formyl group appears to play a dual role in the initiator identity of N-formylmethionyl-tRNA by promoting its recognition by IF2 and preventing the misappropriation of this tRNA by the elongation apparatus. This is Methionyl-tRNA formyltransferase from Francisella tularensis subsp. mediasiatica (strain FSC147).